Consider the following 119-residue polypeptide: Large ribosomal subunit protein uL22 (119 aa).

It belongs to the universal ribosomal protein uL22 family. In terms of assembly, part of the 50S ribosomal subunit.

Its function is as follows. This protein binds specifically to 23S rRNA; its binding is stimulated by other ribosomal proteins, e.g. L4, L17, and L20. It is important during the early stages of 50S assembly. It makes multiple contacts with different domains of the 23S rRNA in the assembled 50S subunit and ribosome. Functionally, the globular domain of the protein is located near the polypeptide exit tunnel on the outside of the subunit, while an extended beta-hairpin is found that lines the wall of the exit tunnel in the center of the 70S ribosome. In Rickettsia conorii (strain ATCC VR-613 / Malish 7), this protein is Large ribosomal subunit protein uL22.